The chain runs to 625 residues: Archaeosine synthase subunit alpha (625 aa).

A PUA domain is found at 556–624 (KYVVKIDDFV…VAVDVRHVKK (69 aa)).

Belongs to the archaeosine synthase type 1 family. In terms of assembly, forms a robust complex with the archaeosine synthase beta subunit RaSEA. Formation of this complex highly increases lysine transfer activity. The complex likely consists of an alpha(2)beta(2) heterotetrameric structure.

The catalysed reaction is 7-cyano-7-carbaguanosine(15) in tRNA + L-lysine = 7-N-[(5S)-5-amino-5-carboxypentyl]formamidino-7-deazaguanosine(15) in tRNA. It participates in tRNA modification; archaeosine-tRNA biosynthesis. Its function is as follows. Functions in the biosynthesis of archaeosine, a modified nucleoside present in the dihydrouridine loop (D-loop) of archaeal tRNAs. Catalyzes the addition of L-lysine to the cyano group of 7-cyano-7-deazaguanine (preQ0)-modified tRNAs at position 15, to generate q0kN15-tRNA, a q0N lysine adduct identified as 7-N-[(5S)-5-amino-5-carboxypentyl]formamidino-7-deazaguanosine. The polypeptide is Archaeosine synthase subunit alpha (Methanosarcina acetivorans (strain ATCC 35395 / DSM 2834 / JCM 12185 / C2A)).